The chain runs to 161 residues: Phosphopantetheine adenylyltransferase (161 aa).

Threonine 10 contacts substrate. Residues 10–11 and histidine 18 contribute to the ATP site; that span reads TF. Residues lysine 42, leucine 74, and arginine 88 each coordinate substrate. Residues 89–91, glutamate 99, and 123–129 each bind ATP; these read GVR and YIHISST.

It belongs to the bacterial CoaD family. As to quaternary structure, homohexamer. It depends on Mg(2+) as a cofactor.

The protein localises to the cytoplasm. The enzyme catalyses (R)-4'-phosphopantetheine + ATP + H(+) = 3'-dephospho-CoA + diphosphate. Its pathway is cofactor biosynthesis; coenzyme A biosynthesis; CoA from (R)-pantothenate: step 4/5. In terms of biological role, reversibly transfers an adenylyl group from ATP to 4'-phosphopantetheine, yielding dephospho-CoA (dPCoA) and pyrophosphate. This Aquifex aeolicus (strain VF5) protein is Phosphopantetheine adenylyltransferase.